The sequence spans 565 residues: Sulfite reductase [NADPH] hemoprotein beta-component (565 aa).

[4Fe-4S] cluster is bound by residues C429, C435, C474, and C478. C478 is a binding site for siroheme.

It belongs to the nitrite and sulfite reductase 4Fe-4S domain family. In terms of assembly, alpha(8)-beta(8). The alpha component is a flavoprotein, the beta component is a hemoprotein. The cofactor is siroheme. [4Fe-4S] cluster serves as cofactor.

The enzyme catalyses hydrogen sulfide + 3 NADP(+) + 3 H2O = sulfite + 3 NADPH + 4 H(+). It participates in sulfur metabolism; hydrogen sulfide biosynthesis; hydrogen sulfide from sulfite (NADPH route): step 1/1. Functionally, component of the sulfite reductase complex that catalyzes the 6-electron reduction of sulfite to sulfide. This is one of several activities required for the biosynthesis of L-cysteine from sulfate. The chain is Sulfite reductase [NADPH] hemoprotein beta-component from Shewanella sp. (strain MR-7).